The chain runs to 147 residues: Ribonuclease 4 (147 aa).

The first 28 residues, 1–28, serve as a signal peptide directing secretion; it reads MALQRTHSLLLLLLLTLLGLGLVQPSYG. At glutamine 29 the chain carries Pyrrolidone carboxylic acid. Arginine 35, histidine 40, lysine 68, asparagine 71, and threonine 72 together coordinate dUMP. The active-site Proton acceptor is the histidine 40. Intrachain disulfides connect cysteine 53–cysteine 109, cysteine 67–cysteine 120, cysteine 85–cysteine 135, and cysteine 92–cysteine 99. Histidine 144 functions as the Proton donor in the catalytic mechanism. Residue phenylalanine 145 participates in dUMP binding.

Belongs to the pancreatic ribonuclease family.

It is found in the secreted. Its function is as follows. Cleaves preferentially after uridine bases. Has antimicrobial activity against uropathogenic E.coli (UPEC). Probably contributes to urinary tract sterility. The chain is Ribonuclease 4 (RNASE4) from Pongo abelii (Sumatran orangutan).